Consider the following 430-residue polypeptide: Histidine--tRNA ligase (430 aa).

Belongs to the class-II aminoacyl-tRNA synthetase family. In terms of assembly, homodimer.

Its subcellular location is the cytoplasm. It carries out the reaction tRNA(His) + L-histidine + ATP = L-histidyl-tRNA(His) + AMP + diphosphate + H(+). The polypeptide is Histidine--tRNA ligase (Acinetobacter baumannii (strain ACICU)).